The following is a 567-amino-acid chain: Septation ring formation regulator EzrA (567 aa).

Over 1–2 (ME) the chain is Extracellular. A helical transmembrane segment spans residues 3 to 21 (IAVIVLLLLGGVMIYNHVY). At 22 to 567 (RKKMYSEIDR…IFRDERSKEE (546 aa)) the chain is on the cytoplasmic side. Coiled-coil stretches lie at residues 97 to 188 (RYAK…LTAS) and 254 to 465 (REIV…LEEK).

It belongs to the EzrA family.

The protein resides in the cell membrane. Functionally, negative regulator of FtsZ ring formation; modulates the frequency and position of FtsZ ring formation. Inhibits FtsZ ring formation at polar sites. Interacts either with FtsZ or with one of its binding partners to promote depolymerization. This chain is Septation ring formation regulator EzrA, found in Geobacillus sp. (strain WCH70).